A 150-amino-acid chain; its full sequence is Flagellar assembly factor FliW (150 aa).

Belongs to the FliW family. In terms of assembly, interacts with translational regulator CsrA and flagellin(s).

Its subcellular location is the cytoplasm. Functionally, acts as an anti-CsrA protein, binds CsrA and prevents it from repressing translation of its target genes, one of which is flagellin. Binds to flagellin and participates in the assembly of the flagellum. This chain is Flagellar assembly factor FliW, found in Leptospira borgpetersenii serovar Hardjo-bovis (strain JB197).